Consider the following 154-residue polypeptide: MINSLLITNNNGNIVFSKYYSNINDEKQSEYEKLLYQFTKDEWVNSKNEKHLVTEFSGYITVFTNVGDLMLFLCGSEEMDELALSDVFFPIIESLKDICKKKGVTEQNFIEQIPKFILYLDEIIQRGHLDQVQLESIQNYSSLKHDQPIKKDNV.

The protein belongs to the adaptor complexes small subunit family. As to quaternary structure, component of the TSET complex, a heterohexamer composed of tstA, tstB, tstC, tstD, tstE and tstF, which may act in plasma membrane turnover. tstA, tstB, tstC and tstD are likely to be the core complex members with tstE and tstF acting as associated scaffold proteins.

The protein resides in the cell membrane. It is found in the cytoplasm. This Dictyostelium discoideum (Social amoeba) protein is TSET complex member tstD.